Consider the following 542-residue polypeptide: Putative selenium-binding protein (542 aa).

The protein belongs to the selenium-binding protein family.

This is Putative selenium-binding protein from Caenorhabditis elegans.